A 1395-amino-acid polypeptide reads, in one-letter code: G-protein coupled receptor-associated sorting protein 1 (1395 aa).

Disordered stretches follow at residues 1 to 25, 45 to 83, and 269 to 288; these read MTGA…VVGG, QIMP…AKAI, and TNTW…FRSK. Positions 269-281 are enriched in basic and acidic residues; sequence TNTWSGPREDPNS. Serine 297 carries the phosphoserine modification. The tract at residues 446–469 is disordered; sequence SMGTGASSKSRPRTDGERIGDSLF. Basic and acidic residues predominate over residues 457–469; it reads PRTDGERIGDSLF. Serine 631 and serine 899 each carry phosphoserine. Residues 899-1395 form an OPRD1-binding region; the sequence is SETEEETIFG…QNDPEGDQEN (497 aa).

The protein belongs to the GPRASP family. Interacts with cytoplasmic tails of a variety of G-protein coupled receptors such as D2 dopamine receptor/DRD2, delta opioid receptor/OPRD1, beta-2 adrenergic receptor/ADRB2 and D4 dopamine receptor/DRD4. Interacts with PER1. Interacts with BECN2; the interaction is direct. As to expression, expressed in the brain, with lower expression in medulla, spinal cord and substantia nigra.

It localises to the cytoplasm. In terms of biological role, modulates lysosomal sorting and functional down-regulation of a variety of G-protein coupled receptors. Targets receptors for degradation in lysosomes via its interaction with BECN2. The sequence is that of G-protein coupled receptor-associated sorting protein 1 (GPRASP1) from Homo sapiens (Human).